Consider the following 316-residue polypeptide: MQWTEVSVMTTNEAVEAVSNILQEAGASGVKIDDAADYANLKPGKYGEIVDLDSIPHRTSGAEISAYYPETIFVPEILPTIRQRVQELTQFGLDPTPGTVTTKAVDDESWATAWQKYYHPVRVTRYLTVTPSWEKYTPVQPNEHVIRLDPGMAFGTGTHPTTRLSMTALEMVVRGGETMYDVGTGSGVLSIAAKYLGVNQITAFDLDEVAVRSAKTNLDLNPIATDVVAKPNDLLKGIHHPVDLVVANILAEIILPLVPQAWENLTPGGYFLTSGIIADKLAEVVAAQEKQGFVIDNILQMKDWRGVIAHRPTEDE.

Residues T162, G183, D205, and N248 each contribute to the S-adenosyl-L-methionine site.

Belongs to the methyltransferase superfamily. PrmA family.

The protein localises to the cytoplasm. It catalyses the reaction L-lysyl-[protein] + 3 S-adenosyl-L-methionine = N(6),N(6),N(6)-trimethyl-L-lysyl-[protein] + 3 S-adenosyl-L-homocysteine + 3 H(+). In terms of biological role, methylates ribosomal protein L11. The protein is Ribosomal protein L11 methyltransferase of Levilactobacillus brevis (strain ATCC 367 / BCRC 12310 / CIP 105137 / JCM 1170 / LMG 11437 / NCIMB 947 / NCTC 947) (Lactobacillus brevis).